The chain runs to 308 residues: Phenylcoumaran benzylic ether reductase Betv6 (308 aa).

NADP(+) contacts are provided by residues 11-17 (GGTGYIG), Arg-36, and Lys-45. The active-site Proton acceptor is the Lys-133. Position 137 (Arg-137) interacts with NADP(+).

This sequence belongs to the NmrA-type oxidoreductase family. Isoflavone reductase subfamily.

The catalysed reaction is (-)-dehydrodiconiferyl alcohol + NADPH + H(+) = (S)-isodihydrodehydrodiconiferyl alcohol + NADP(+). It catalyses the reaction (+)-dehydrodiconiferyl alcohol + NADPH + H(+) = (R)-isodihydrodehydrodiconiferyl alcohol + NADP(+). Functionally, oxidoreductase involved in lignan biosynthesis. Catalyzes the NADPH-dependent reduction of phenylcoumaran benzylic ethers. Converts dehydrodiconiferyl alcohol (DDC) to isodihydrodehydrodiconiferyl alcohol (IDDDC). The chain is Phenylcoumaran benzylic ether reductase Betv6 from Betula pendula (European white birch).